Here is a 1076-residue protein sequence, read N- to C-terminus: DNA-directed RNA polymerase subunit beta (1076 aa).

Belongs to the RNA polymerase beta chain family. In terms of assembly, in plastids the minimal PEP RNA polymerase catalytic core is composed of four subunits: alpha, beta, beta', and beta''. When a (nuclear-encoded) sigma factor is associated with the core the holoenzyme is formed, which can initiate transcription.

The protein localises to the plastid. It carries out the reaction RNA(n) + a ribonucleoside 5'-triphosphate = RNA(n+1) + diphosphate. Functionally, DNA-dependent RNA polymerase catalyzes the transcription of DNA into RNA using the four ribonucleoside triphosphates as substrates. The protein is DNA-directed RNA polymerase subunit beta of Euglena longa (Euglenophycean alga).